Reading from the N-terminus, the 677-residue chain is Methionine--tRNA ligase (677 aa).

Residues 15 to 25 (PYANGSIHLGH) carry the 'HIGH' region motif. Zn(2+) contacts are provided by Cys146, Cys149, Cys159, and Cys162. The 'KMSKS' region motif lies at 333 to 337 (KMSKS). ATP is bound at residue Lys336. The tRNA-binding domain maps to 575 to 677 (DFAKVDLRVA…AGAKPGHQVK (103 aa)).

This sequence belongs to the class-I aminoacyl-tRNA synthetase family. MetG type 1 subfamily. As to quaternary structure, homodimer. Requires Zn(2+) as cofactor.

Its subcellular location is the cytoplasm. It catalyses the reaction tRNA(Met) + L-methionine + ATP = L-methionyl-tRNA(Met) + AMP + diphosphate. In terms of biological role, is required not only for elongation of protein synthesis but also for the initiation of all mRNA translation through initiator tRNA(fMet) aminoacylation. This Escherichia coli (strain ATCC 8739 / DSM 1576 / NBRC 3972 / NCIMB 8545 / WDCM 00012 / Crooks) protein is Methionine--tRNA ligase.